The sequence spans 334 residues: MPKRRDILAIVLIVLPWTLLITVWHQSSLAPLLAVHKDEGSDPRHEAPPGADPREYCMSDRDIVEVVRTEYVYTRPPPWSDTLPTIHVVTPTYSRPVQKAELTRMANTLLHVPNLHWLVVEDAPRRTPLTARLLRDTGLNYTHLHVETPRNYKLRGDARDPRIPRGTMQRNLALRWLRETFPRNSTQPGVVYFADDDNTYSLELFEEMRSTRRVSVWPVAFVGGLRYEAPRVNGAGKVVGWKTVFDPHRPFAIDMAGFAVNLRLILQRSQAYFKLRGVKGGYQESSLLRELVTLNDLEPKAANCTKILVWHTRTEKPVLVNEGKKGFTDPSVEI.

The Cytoplasmic segment spans residues 1–6 (MPKRRD). Positions 3 to 5 (KRR) are essential for transport from endoplasmic reticulum to Golgi apparatus and interaction with SAR1A. A helical; Signal-anchor for type II membrane protein transmembrane segment spans residues 7 to 27 (ILAIVLIVLPWTLLITVWHQS). At 28–334 (SLAPLLAVHK…KGFTDPSVEI (307 aa)) the chain is on the lumenal side. 91–93 (PTY) contacts UDP-alpha-D-glucuronate. 2 positions are modified to phosphothreonine: Thr-103 and Thr-108. Position 122 (Asp-122) interacts with UDP-alpha-D-glucuronate. Asn-140 carries an N-linked (GlcNAc...) asparagine glycan. 2 residues coordinate UDP-alpha-D-glucuronate: Arg-165 and Arg-170. The N-linked (GlcNAc...) asparagine glycan is linked to Asn-184. 195 to 197 (DDD) contributes to the UDP-alpha-D-glucuronate binding site. Asp-197 lines the Mn(2+) pocket. The interval 245-254 (FDPHRPFAID) is interaction with galactose moiety of substrate glycoprotein. The active-site Proton donor/acceptor is the Glu-284. Asn-303 is a glycosylation site (N-linked (GlcNAc...) asparagine). 311-313 (HTR) serves as a coordination point for UDP-alpha-D-glucuronate.

The protein belongs to the glycosyltransferase 43 family. As to quaternary structure, homodimer. Interacts with SAR1A. The cofactor is Mn(2+). The soluble form derives from the membrane form by proteolytic processing.

It localises to the golgi apparatus membrane. The protein resides in the secreted. It is found in the endoplasmic reticulum membrane. It catalyses the reaction 3-O-(beta-D-galactosyl-(1-&gt;3)-beta-D-galactosyl-(1-&gt;4)-beta-D-xylosyl)-L-seryl-[protein] + UDP-alpha-D-glucuronate = 3-O-(beta-D-GlcA-(1-&gt;3)-beta-D-Gal-(1-&gt;3)-beta-D-Gal-(1-&gt;4)-beta-D-Xyl)-L-seryl-[protein] + UDP + H(+). Its pathway is protein modification; protein glycosylation. Its function is as follows. Involved in the biosynthesis of L2/HNK-1 carbohydrate epitope on glycoproteins. Can also play a role in glycosaminoglycan biosynthesis. Substrates include asialo-orosomucoid (ASOR), asialo-fetuin, and asialo-neural cell adhesion molecule. Requires sphingomyelin for activity: stearoyl-sphingomyelin was the most effective, followed by palmitoyl-sphingomyelin and lignoceroyl-sphingomyelin. Activity was demonstrated only for sphingomyelin with a saturated fatty acid and not for that with an unsaturated fatty acid, regardless of the length of the acyl group. In Mus musculus (Mouse), this protein is Galactosylgalactosylxylosylprotein 3-beta-glucuronosyltransferase 1.